Consider the following 126-residue polypeptide: Aspartate 1-decarboxylase (126 aa).

Serine 25 serves as the catalytic Schiff-base intermediate with substrate; via pyruvic acid. The residue at position 25 (serine 25) is a Pyruvic acid (Ser). A substrate-binding site is contributed by threonine 57. The active-site Proton donor is the tyrosine 58. 73 to 75 serves as a coordination point for substrate; sequence GAA.

The protein belongs to the PanD family. As to quaternary structure, heterooctamer of four alpha and four beta subunits. It depends on pyruvate as a cofactor. In terms of processing, is synthesized initially as an inactive proenzyme, which is activated by self-cleavage at a specific serine bond to produce a beta-subunit with a hydroxyl group at its C-terminus and an alpha-subunit with a pyruvoyl group at its N-terminus.

The protein localises to the cytoplasm. It carries out the reaction L-aspartate + H(+) = beta-alanine + CO2. The protein operates within cofactor biosynthesis; (R)-pantothenate biosynthesis; beta-alanine from L-aspartate: step 1/1. Catalyzes the pyruvoyl-dependent decarboxylation of aspartate to produce beta-alanine. This Proteus mirabilis (strain HI4320) protein is Aspartate 1-decarboxylase.